The primary structure comprises 345 residues: Eukaryotic translation initiation factor 3 subunit F (345 aa).

The region spanning 30–166 (VVIQPQALFS…TRAYISAPVG (137 aa)) is the MPN domain. Positions 308-345 (GGESGSTESGQRGGQRGGKGGRGGQQRNQERSGEEVRA) are disordered. The segment covering 318-331 (QRGGQRGGKGGRGG) has biased composition (gly residues). Residues 335–345 (NQERSGEEVRA) are compositionally biased toward basic and acidic residues.

It belongs to the eIF-3 subunit F family. As to quaternary structure, component of the eukaryotic translation initiation factor 3 (eIF-3) complex.

It is found in the cytoplasm. Component of the eukaryotic translation initiation factor 3 (eIF-3) complex, which is involved in protein synthesis of a specialized repertoire of mRNAs and, together with other initiation factors, stimulates binding of mRNA and methionyl-tRNAi to the 40S ribosome. The eIF-3 complex specifically targets and initiates translation of a subset of mRNAs involved in cell proliferation. In Aspergillus terreus (strain NIH 2624 / FGSC A1156), this protein is Eukaryotic translation initiation factor 3 subunit F.